The sequence spans 208 residues: Na(+)-translocating NADH-quinone reductase subunit D (208 aa).

Transmembrane regions (helical) follow at residues 42-62, 70-90, 103-123, 131-151, and 178-198; these read IVMT…ISLI, VRII…DQIL, VFVG…AFAM, FVDG…VAFI, and NGLF…IWGI.

The protein belongs to the NqrDE/RnfAE family. As to quaternary structure, composed of six subunits; NqrA, NqrB, NqrC, NqrD, NqrE and NqrF.

It localises to the cell inner membrane. It carries out the reaction a ubiquinone + n Na(+)(in) + NADH + H(+) = a ubiquinol + n Na(+)(out) + NAD(+). NQR complex catalyzes the reduction of ubiquinone-1 to ubiquinol by two successive reactions, coupled with the transport of Na(+) ions from the cytoplasm to the periplasm. NqrA to NqrE are probably involved in the second step, the conversion of ubisemiquinone to ubiquinol. The sequence is that of Na(+)-translocating NADH-quinone reductase subunit D from Pasteurella multocida (strain Pm70).